Here is a 684-residue protein sequence, read N- to C-terminus: Chaperone protein HtpG (684 aa).

The tract at residues 1–329 (MSKKGTIGVT…SPDIPLNVSR (329 aa)) is a; substrate-binding. Residues 330 to 548 (SYLQSDANVK…FMRRMRDMAQ (219 aa)) are b. Residues 549–684 (LQPGMSFYGE…EFIRRSQRLL (136 aa)) are c.

This sequence belongs to the heat shock protein 90 family. In terms of assembly, homodimer.

It is found in the cytoplasm. Molecular chaperone. Has ATPase activity. The protein is Chaperone protein HtpG of Porphyromonas gingivalis (strain ATCC 33277 / DSM 20709 / CIP 103683 / JCM 12257 / NCTC 11834 / 2561).